A 449-amino-acid chain; its full sequence is Glucose-6-phosphate isomerase (449 aa).

Glutamate 291 functions as the Proton donor in the catalytic mechanism. Active-site residues include histidine 312 and lysine 426.

This sequence belongs to the GPI family.

The protein localises to the cytoplasm. The enzyme catalyses alpha-D-glucose 6-phosphate = beta-D-fructose 6-phosphate. It participates in carbohydrate biosynthesis; gluconeogenesis. Its pathway is carbohydrate degradation; glycolysis; D-glyceraldehyde 3-phosphate and glycerone phosphate from D-glucose: step 2/4. Its function is as follows. Catalyzes the reversible isomerization of glucose-6-phosphate to fructose-6-phosphate. The sequence is that of Glucose-6-phosphate isomerase from Streptococcus equi subsp. zooepidemicus (strain MGCS10565).